We begin with the raw amino-acid sequence, 300 residues long: PTB domain-containing engulfment adapter protein 1 (300 aa).

A PID domain is found at 21–176; that stretch reads AKHFIPYNAK…GGLQKRIQDL (156 aa). Residues 160-199 adopt a coiled-coil conformation; that stretch reads VETRKQIGGLQKRIQDLETENVELKKQLQVLEEQLMIAQV.

The protein belongs to the ced-6 family.

It localises to the cytoplasm. Its function is as follows. May function as an adapter protein. Required for efficient phagocytosis of apoptotic cells. May play a role in the internalization and endosomal trafficking of various lrp1 ligands. The polypeptide is PTB domain-containing engulfment adapter protein 1 (gulp1) (Danio rerio (Zebrafish)).